The primary structure comprises 359 residues: Very-long-chain (3R)-3-hydroxyacyl-CoA dehydratase (359 aa).

The Cytoplasmic portion of the chain corresponds to methionine 1–lysine 144. The region spanning alanine 3 to threonine 92 is the CS domain. Residues leucine 109–arginine 133 adopt a coiled-coil conformation. Residues glycine 145–methionine 165 form a helical membrane-spanning segment. Residues threonine 166–aspartate 186 are Lumenal-facing. A helical transmembrane segment spans residues valine 187–valine 207. The Cytoplasmic portion of the chain corresponds to lysine 208–threonine 209. A helical membrane pass occupies residues glycine 210–glycine 230. The Lumenal segment spans residues serine 231–proline 239. The chain crosses the membrane as a helical span at residues valine 240–methionine 260. Topologically, residues leucine 261 to threonine 277 are cytoplasmic. A helical transmembrane segment spans residues isoleucine 278 to isoleucine 298. Active-site residues include tyrosine 283 and glutamate 290. At proline 299–leucine 317 the chain is on the lumenal side. Residues serine 318–isoleucine 338 form a helical membrane-spanning segment. The Cytoplasmic segment spans residues asparagine 339–asparagine 359.

This sequence belongs to the very long-chain fatty acids dehydratase HACD family.

Its subcellular location is the endoplasmic reticulum membrane. The catalysed reaction is a very-long-chain (3R)-3-hydroxyacyl-CoA = a very-long-chain (2E)-enoyl-CoA + H2O. It carries out the reaction (3R)-hydroxyhexadecanoyl-CoA = (2E)-hexadecenoyl-CoA + H2O. Its pathway is lipid metabolism; fatty acid biosynthesis. Catalyzes the third of the four reactions of the long-chain fatty acids elongation cycle. This endoplasmic reticulum-bound enzymatic process, allows the addition of two carbons to the chain of long- and very long-chain fatty acids/VLCFAs per cycle. This enzyme catalyzes the dehydration of the 3-hydroxyacyl-CoA intermediate into trans-2,3-enoyl-CoA, within each cycle of fatty acid elongation. Thereby, it participates in the production of VLCFAs of different chain lengths that are involved in multiple biological processes as precursors of membrane lipids and lipid mediators. Involved in Rac1-signaling pathways leading to the modulation of gene expression. The chain is Very-long-chain (3R)-3-hydroxyacyl-CoA dehydratase from Danio rerio (Zebrafish).